Here is an 821-residue protein sequence, read N- to C-terminus: uncharacterized protein (821 aa).

Disordered regions lie at residues 1-20, 55-96, 134-205, 240-263, 274-293, 360-381, 430-450, 467-497, 512-535, and 549-641; these read MGQTNSRHSLIETDEPTTSS, SENY…EAYS, SYDF…NNEH, RLHQSPSPIPNSNDNDSQTRRSSW, PEEFPNASNPEAHSNFTPLN, NVLQNSSQNGNDQISSDPESNS, TSEDHAPTMTQENQSLHNESR, EFSTDLPPTFERSNSTFSHPEPTRSDFSQAF, RNLFPTSNSGNQSTSSFSRYNQPT, and AQEP…SNQT. Polar residues-rich tracts occupy residues 58–88 and 185–203; these read YADTPSRNTPNSSNGFPSETLVTSSAHCSTQ and SLPSNSNSTYTTPLQSINN. Residues 279–293 are compositionally biased toward polar residues; sequence NASNPEAHSNFTPLN. The segment covering 437 to 450 has biased composition (polar residues); the sequence is TMTQENQSLHNESR. 2 stretches are compositionally biased toward low complexity: residues 517 to 529 and 568 to 578; these read TSNSGNQSTSSFS and SSLLDSSNSNS. The span at 579–622 shows a compositional bias: polar residues; sequence QRPFSTVPSESNVFSRNASGNFSMSQTHQPTTDNTSSFSTQPGR. An RING-type; atypical zinc finger spans residues 766–809; sequence CLICLETYTNGDICRKLQACKHFFHQACIDQWLTTGNNSCPLCR.

This is an uncharacterized protein from Schizosaccharomyces pombe (strain 972 / ATCC 24843) (Fission yeast).